The chain runs to 139 residues: Nucleoside diphosphate kinase (139 aa).

ATP-binding residues include K10, F58, R86, T92, R104, and N114. The Pros-phosphohistidine intermediate role is filled by H117.

The protein belongs to the NDK family. Homotetramer. Requires Mg(2+) as cofactor.

The protein localises to the cytoplasm. It carries out the reaction a 2'-deoxyribonucleoside 5'-diphosphate + ATP = a 2'-deoxyribonucleoside 5'-triphosphate + ADP. The enzyme catalyses a ribonucleoside 5'-diphosphate + ATP = a ribonucleoside 5'-triphosphate + ADP. In terms of biological role, major role in the synthesis of nucleoside triphosphates other than ATP. The ATP gamma phosphate is transferred to the NDP beta phosphate via a ping-pong mechanism, using a phosphorylated active-site intermediate. The protein is Nucleoside diphosphate kinase of Rhodococcus erythropolis (strain PR4 / NBRC 100887).